A 278-amino-acid polypeptide reads, in one-letter code: Rhomboid protease GlpG (278 aa).

6 helical membrane passes run 94-114 (AGPL…LMLI), 143-163 (AFLH…WYLG), 175-195 (LLVL…LFSG), 196-216 (ANFG…WLTG), 224-241 (ISLP…LIAG), and 245-267 (ILGL…LMAF). The active-site Nucleophile is the serine 202. Histidine 255 is a catalytic residue.

It belongs to the peptidase S54 family.

It is found in the cell inner membrane. It carries out the reaction Cleaves type-1 transmembrane domains using a catalytic dyad composed of serine and histidine that are contributed by different transmembrane domains.. Rhomboid-type serine protease that catalyzes intramembrane proteolysis. This Yersinia pestis bv. Antiqua (strain Antiqua) protein is Rhomboid protease GlpG.